Here is a 270-residue protein sequence, read N- to C-terminus: Undecaprenyl-diphosphatase (270 aa).

8 helical membrane-spanning segments follow: residues 14 to 34 (GLTE…PTFL), 40 to 60 (GITF…LYFW), 88 to 108 (FYII…ETTI), 117 to 137 (SLIA…DTSG), 146 to 166 (ITLK…IPGV), 189 to 209 (FSFL…LSGL), 221 to 241 (PLLI…AFLL), and 249 to 269 (LYPF…FINF).

Belongs to the UppP family.

The protein localises to the cell inner membrane. The enzyme catalyses di-trans,octa-cis-undecaprenyl diphosphate + H2O = di-trans,octa-cis-undecaprenyl phosphate + phosphate + H(+). Functionally, catalyzes the dephosphorylation of undecaprenyl diphosphate (UPP). Confers resistance to bacitracin. The sequence is that of Undecaprenyl-diphosphatase from Geotalea daltonii (strain DSM 22248 / JCM 15807 / FRC-32) (Geobacter daltonii).